The primary structure comprises 32 residues: Yop proteins translocation protein A (32 aa).

This chain is Yop proteins translocation protein A (yscA), found in Yersinia pestis.